The following is a 142-amino-acid chain: UPF0102 protein Bcep18194_A3391 (142 aa).

Residues 1-27 (MCHAAPARPGDGRGLPRAGDNFSGAAR) form a disordered region.

The protein belongs to the UPF0102 family.

The chain is UPF0102 protein Bcep18194_A3391 from Burkholderia lata (strain ATCC 17760 / DSM 23089 / LMG 22485 / NCIMB 9086 / R18194 / 383).